The sequence spans 574 residues: Lipase maturation factor 1 (574 aa).

A disordered region spans residues 1–39 (MRPDSLVMAAPEGSLRKRKVGGAEHSPASQPSLARDPAD). Residues 1–49 (MRPDSLVMAAPEGSLRKRKVGGAEHSPASQPSLARDPADSPARLHTGTF) are Cytoplasmic-facing. Residues 50–72 (WLTRIVLLRALAFIYFVAFLVAF) traverse the membrane as a helical segment. At 73–127 (NQNKALIGDRGLLPCKLYLKNVQEYFQGSTGWAAWTYAPTIMWLLDWSDMNFNLD) the chain is on the lumenal side. A helical membrane pass occupies residues 128 to 151 (LIALLGLGISSFVLVTGCANMILM). Topologically, residues 152–207 (TALWALYMSLVNVGQIWYSFGWESQLLETGFLGIFLSPLWTLSRLPKNTPTSQIVL) are cytoplasmic. A helical membrane pass occupies residues 208–221 (WGFRWLIFRIMLGA). Residues 222–292 (GLIKVRGDKC…LGRRMRILHG (71 aa)) are Lumenal-facing. Residues 293–321 (VLQILFQVILIISGNLSFLNWLTIVPSLA) traverse the membrane as a helical segment. The Cytoplasmic segment spans residues 322–367 (CFDDAALGFLFPSGPQGLKKQVLEIQREDTQRVQPKPRDRGCLVRQ). A helical membrane pass occupies residues 368–388 (VVNISLGILVAWLSVPVVINL). Residues 389–574 (LSSRQIMNTS…LPEPPSRHTR (186 aa)) lie on the Lumenal side of the membrane.

Belongs to the lipase maturation factor family. In terms of assembly, interacts with LPL and SEL1L. As to expression, expressed in all tissues synthesizing lipoprotein lipase (Lpl) and hepatic lipase (Lipc), including adipose tissue, skeletal muscle, heart, and liver. Expressed at higher levels in tissues that express little or no lipase activity such as testis and pancreas suggesting additional functions in these tissues.

Its subcellular location is the endoplasmic reticulum membrane. In terms of biological role, involved in the maturation of specific proteins in the endoplasmic reticulum. Required for maturation and transport of active lipoprotein lipase (LPL) through the secretory pathway. Each LMF1 molecule chaperones 50 or more molecules of LPL. In Mus musculus (Mouse), this protein is Lipase maturation factor 1 (Lmf1).